The chain runs to 433 residues: Protoheme IX farnesyltransferase 2 (433 aa).

Residues 1–164 form a unknown region; the sequence is MQRFTGLVTA…LTKPRLMWLL (164 aa). Transmembrane regions (helical) follow at residues 4-24, 35-55, 67-87, 95-115, 160-180, 184-204, 236-256, 257-277, 282-304, 308-330, 357-377, 378-398, and 413-433; these read FTGL…LGVA, AVAH…AAAL, WGVT…MAVL, LHLF…TWHL, LMWL…VTGA, GVTI…AGTF, AFGV…VNPL, AAAL…VVLK, WNTV…AVAG, LPAL…NLAI, ILYW…VAGF, GPVY…TVVV, and HASN…TMVI. A protoheme IX prenyltransferase region spans residues 165–430; that stretch reads CLLALSGMAL…ALLVAILVET (266 aa).

This sequence in the C-terminal section; belongs to the UbiA prenyltransferase family. Protoheme IX farnesyltransferase subfamily.

It localises to the cell membrane. It carries out the reaction heme b + (2E,6E)-farnesyl diphosphate + H2O = Fe(II)-heme o + diphosphate. The protein operates within porphyrin-containing compound metabolism; heme O biosynthesis; heme O from protoheme: step 1/1. Converts heme B (protoheme IX) to heme O by substitution of the vinyl group on carbon 2 of heme B porphyrin ring with a hydroxyethyl farnesyl side group. The polypeptide is Protoheme IX farnesyltransferase 2 (ctaB2) (Natronomonas pharaonis (strain ATCC 35678 / DSM 2160 / CIP 103997 / JCM 8858 / NBRC 14720 / NCIMB 2260 / Gabara) (Halobacterium pharaonis)).